A 276-amino-acid chain; its full sequence is Homeobox protein TOS8 (276 aa).

Positions 176-185 are enriched in polar residues; sequence NSVRGSNNGY. Residues 176–199 form a disordered region; sequence NSVRGSNNGYSAKEKKHKAHGKRS. Positions 189–199 are enriched in basic residues; the sequence is EKKHKAHGKRS. Positions 194-256 form a DNA-binding region, homeobox; TALE-type; sequence AHGKRSNLPK…NARRRKIFSG (63 aa).

Belongs to the TALE/CUP9 homeobox family.

It localises to the nucleus. This Saccharomyces cerevisiae (strain ATCC 204508 / S288c) (Baker's yeast) protein is Homeobox protein TOS8 (TOS8).